A 199-amino-acid chain; its full sequence is Holliday junction branch migration complex subunit RuvA (199 aa).

The tract at residues 1–64 is domain I; the sequence is MIAFLKGAVF…ENEFKLFGFL (64 aa). The segment at 65 to 143 is domain II; it reads DQDELRLFKT…ELKLVEVEKE (79 aa). Residues 144–148 are flexible linker; the sequence is QRPLL. Residues 148-199 are domain III; sequence LDELMEALEILGYSRSEVLPAIMDLNRNKQLGNIVEENIKLVLKAKAQEMRR.

This sequence belongs to the RuvA family. In terms of assembly, homotetramer. Forms an RuvA(8)-RuvB(12)-Holliday junction (HJ) complex. HJ DNA is sandwiched between 2 RuvA tetramers; dsDNA enters through RuvA and exits via RuvB. An RuvB hexamer assembles on each DNA strand where it exits the tetramer. Each RuvB hexamer is contacted by two RuvA subunits (via domain III) on 2 adjacent RuvB subunits; this complex drives branch migration. In the full resolvosome a probable DNA-RuvA(4)-RuvB(12)-RuvC(2) complex forms which resolves the HJ.

It is found in the cytoplasm. In terms of biological role, the RuvA-RuvB-RuvC complex processes Holliday junction (HJ) DNA during genetic recombination and DNA repair, while the RuvA-RuvB complex plays an important role in the rescue of blocked DNA replication forks via replication fork reversal (RFR). RuvA specifically binds to HJ cruciform DNA, conferring on it an open structure. The RuvB hexamer acts as an ATP-dependent pump, pulling dsDNA into and through the RuvAB complex. HJ branch migration allows RuvC to scan DNA until it finds its consensus sequence, where it cleaves and resolves the cruciform DNA. This chain is Holliday junction branch migration complex subunit RuvA, found in Syntrophomonas wolfei subsp. wolfei (strain DSM 2245B / Goettingen).